Consider the following 533-residue polypeptide: 2-isopropylmalate synthase (533 aa).

The region spanning I8–A269 is the Pyruvate carboxyltransferase domain. Mn(2+) is bound by residues D17, H208, H210, and N244. A regulatory domain region spans residues R408–L533.

This sequence belongs to the alpha-IPM synthase/homocitrate synthase family. LeuA type 1 subfamily. In terms of assembly, homodimer. Requires Mn(2+) as cofactor.

Its subcellular location is the cytoplasm. It catalyses the reaction 3-methyl-2-oxobutanoate + acetyl-CoA + H2O = (2S)-2-isopropylmalate + CoA + H(+). Its pathway is amino-acid biosynthesis; L-leucine biosynthesis; L-leucine from 3-methyl-2-oxobutanoate: step 1/4. Catalyzes the condensation of the acetyl group of acetyl-CoA with 3-methyl-2-oxobutanoate (2-ketoisovalerate) to form 3-carboxy-3-hydroxy-4-methylpentanoate (2-isopropylmalate). This chain is 2-isopropylmalate synthase, found in Picosynechococcus sp. (strain ATCC 27264 / PCC 7002 / PR-6) (Agmenellum quadruplicatum).